The primary structure comprises 81 residues: U12-hexatoxin-Mg1a (81 aa).

The N-terminal stretch at 1-24 (MKAPATIVILIMSLISVLWATADT) is a signal peptide. Positions 25 to 50 (EDGNLLFPIEDFIRKFDEYPVQPKER) are excised as a propeptide. 3 cysteine pairs are disulfide-bonded: C52-C66, C59-C71, and C65-C75. Residue P78 is modified to Proline amide.

Expressed by the venom gland.

The protein resides in the secreted. In terms of biological role, blocks voltage-gated sodium channels (Nav). Intracranial injection into mice causes lacrimation, slow breathing and death. Intrathorax injection into crickets causes death. The protein is U12-hexatoxin-Mg1a of Macrothele gigas (Japanese funnel web spider).